We begin with the raw amino-acid sequence, 158 residues long: Snaclec mucetin subunit alpha (158 aa).

A signal peptide spans 1–23 (MGRFTFVSFGLLVVFLSLSGTGA). 3 disulfide bridges follow: Cys27–Cys38, Cys55–Cys152, and Cys127–Cys144. A C-type lectin domain is found at 34 to 153 (YDRYCYQAFS…CGRENPFVCK (120 aa)).

The protein belongs to the snaclec family. In terms of assembly, dimer and tetramer of heterodimers of alpha and beta subunits ((alphabeta)(2) and (alphabeta)(4)); disulfide-linked. These two multimeric forms are found. In terms of processing, the complex is glycosylated. In terms of tissue distribution, expressed by the venom gland.

It localises to the secreted. Functionally, potent platelet activator that acts via GPIb (GP1BA/GP1BB). After activation by the toxin, the receptor is redistributed on platelet surface thanks to cytoskeletal translocation. The indirect activation of integrin alpha-IIb/beta-3 (ITGA2B/ITGB3) also induced by the toxin is downstream the cytoskeletal translocation of GPIb. This Protobothrops mucrosquamatus (Taiwan habu) protein is Snaclec mucetin subunit alpha.